Reading from the N-terminus, the 163-residue chain is Beta-lactoglobulin-2 (163 aa).

Disulfide bonds link C66-C161 and C106-C120.

It belongs to the calycin superfamily. Lipocalin family. As to quaternary structure, monomer.

It localises to the secreted. Lactoglobulin is the primary component of whey, it binds retinol and is probably involved in the transport of that molecule. The polypeptide is Beta-lactoglobulin-2 (LGB2) (Felis catus (Cat)).